Consider the following 142-residue polypeptide: Large ribosomal subunit protein uL11 (142 aa).

This sequence belongs to the universal ribosomal protein uL11 family. In terms of assembly, part of the ribosomal stalk of the 50S ribosomal subunit. Interacts with L10 and the large rRNA to form the base of the stalk. L10 forms an elongated spine to which L12 dimers bind in a sequential fashion forming a multimeric L10(L12)X complex. In terms of processing, one or more lysine residues are methylated.

Functionally, forms part of the ribosomal stalk which helps the ribosome interact with GTP-bound translation factors. The sequence is that of Large ribosomal subunit protein uL11 from Leptospira interrogans serogroup Icterohaemorrhagiae serovar copenhageni (strain Fiocruz L1-130).